Here is a 402-residue protein sequence, read N- to C-terminus: Arginine biosynthesis bifunctional protein ArgJ (402 aa).

Positions 152, 178, 189, 275, 397, and 402 each coordinate substrate. The active-site Nucleophile is the T189.

Belongs to the ArgJ family. Heterotetramer of two alpha and two beta chains.

It is found in the cytoplasm. The enzyme catalyses N(2)-acetyl-L-ornithine + L-glutamate = N-acetyl-L-glutamate + L-ornithine. It catalyses the reaction L-glutamate + acetyl-CoA = N-acetyl-L-glutamate + CoA + H(+). Its pathway is amino-acid biosynthesis; L-arginine biosynthesis; L-ornithine and N-acetyl-L-glutamate from L-glutamate and N(2)-acetyl-L-ornithine (cyclic): step 1/1. The protein operates within amino-acid biosynthesis; L-arginine biosynthesis; N(2)-acetyl-L-ornithine from L-glutamate: step 1/4. Functionally, catalyzes two activities which are involved in the cyclic version of arginine biosynthesis: the synthesis of N-acetylglutamate from glutamate and acetyl-CoA as the acetyl donor, and of ornithine by transacetylation between N(2)-acetylornithine and glutamate. The polypeptide is Arginine biosynthesis bifunctional protein ArgJ (Symbiobacterium thermophilum (strain DSM 24528 / JCM 14929 / IAM 14863 / T)).